Here is a 204-residue protein sequence, read N- to C-terminus: Guanylate kinase (204 aa).

Residues 4-182 (GLLYVISAPS…ALNQLRAIVQ (179 aa)) enclose the Guanylate kinase-like domain. ATP is bound at residue 11-18 (APSGAGKT).

It belongs to the guanylate kinase family.

It is found in the cytoplasm. It carries out the reaction GMP + ATP = GDP + ADP. Its function is as follows. Essential for recycling GMP and indirectly, cGMP. This Methylococcus capsulatus (strain ATCC 33009 / NCIMB 11132 / Bath) protein is Guanylate kinase.